A 372-amino-acid polypeptide reads, in one-letter code: Glutamate 5-kinase (372 aa).

Lys14 provides a ligand contact to ATP. Positions 54, 141, and 153 each coordinate substrate. Residue 173-174 participates in ATP binding; that stretch reads TD. In terms of domain architecture, PUA spans 280–358; that stretch reads RGRVVIDAGA…SEIESVLGHL (79 aa).

The protein belongs to the glutamate 5-kinase family.

Its subcellular location is the cytoplasm. It carries out the reaction L-glutamate + ATP = L-glutamyl 5-phosphate + ADP. It participates in amino-acid biosynthesis; L-proline biosynthesis; L-glutamate 5-semialdehyde from L-glutamate: step 1/2. In terms of biological role, catalyzes the transfer of a phosphate group to glutamate to form L-glutamate 5-phosphate. This Cupriavidus pinatubonensis (strain JMP 134 / LMG 1197) (Cupriavidus necator (strain JMP 134)) protein is Glutamate 5-kinase.